Here is a 770-residue protein sequence, read N- to C-terminus: Elongation factor G, mitochondrial (770 aa).

The N-terminal 24 residues, 1–24 (MLKLSFRSLTSRLPRLSTLVVRGY), are a transit peptide targeting the mitochondrion. In terms of domain architecture, tr-type G spans 57-353 (KQIRNIGISA…AVCDYLPNPS (297 aa)). Residues 66–73 (AHIDSGKT), 151–155 (DTPGH), and 205–208 (NKMD) contribute to the GTP site.

The protein belongs to the TRAFAC class translation factor GTPase superfamily. Classic translation factor GTPase family. EF-G/EF-2 subfamily.

Its subcellular location is the mitochondrion. Its pathway is protein biosynthesis; polypeptide chain elongation. Functionally, mitochondrial GTPase that catalyzes the GTP-dependent ribosomal translocation step during translation elongation. During this step, the ribosome changes from the pre-translocational (PRE) to the post-translocational (POST) state as the newly formed A-site-bound peptidyl-tRNA and P-site-bound deacylated tRNA move to the P and E sites, respectively. Catalyzes the coordinated movement of the two tRNA molecules, the mRNA and conformational changes in the ribosome. The polypeptide is Elongation factor G, mitochondrial (mef1) (Schizosaccharomyces pombe (strain 972 / ATCC 24843) (Fission yeast)).